The chain runs to 314 residues: Ribosomal protein uL3 glutamine methyltransferase (314 aa).

This sequence belongs to the protein N5-glutamine methyltransferase family. PrmB subfamily.

The enzyme catalyses L-glutaminyl-[ribosomal protein uL3] + S-adenosyl-L-methionine = N(5)-methyl-L-glutaminyl-[ribosomal protein uL3] + S-adenosyl-L-homocysteine + H(+). Functionally, methylates large ribosomal subunit protein uL3 on a specific glutamine residue. This Francisella tularensis subsp. tularensis (strain SCHU S4 / Schu 4) protein is Ribosomal protein uL3 glutamine methyltransferase.